The sequence spans 318 residues: Ribosomal RNA small subunit methyltransferase H (318 aa).

Residues 38-40 (AGH), aspartate 57, leucine 91, aspartate 105, and glutamine 112 each bind S-adenosyl-L-methionine.

It belongs to the methyltransferase superfamily. RsmH family.

It localises to the cytoplasm. The enzyme catalyses cytidine(1402) in 16S rRNA + S-adenosyl-L-methionine = N(4)-methylcytidine(1402) in 16S rRNA + S-adenosyl-L-homocysteine + H(+). Specifically methylates the N4 position of cytidine in position 1402 (C1402) of 16S rRNA. This Clavibacter sepedonicus (Clavibacter michiganensis subsp. sepedonicus) protein is Ribosomal RNA small subunit methyltransferase H.